The chain runs to 233 residues: MQNQRNEYSISLRNLSYIILTISTGIVIHRKFRRIKDIEDLSSRFFRGQQKSLTKLNSLYGYVTSVGDGDNFRFYHTPGGRLLGWHWLRKVPSNRNALKNETLSIRLSGIDAPESGYFGKLGQPFSLEAKQFLARKLEHRSVRVYPLHRDQYNRAVCGVTYYPIRWLFFKRDIGPQLVSRGLAVVYEGANSSYYPTEKSVLMKIQETARKRKLGMHSLGNKLELPKDYKKRNK.

A helical transmembrane segment spans residues 10–29 (ISLRNLSYIILTISTGIVIH). Positions 57–218 (NSLYGYVTSV…RKRKLGMHSL (162 aa)) constitute a TNase-like domain. The active site involves Arg106. Asp111 is a Ca(2+) binding site. Active-site residues include Glu114 and Arg154.

It belongs to the LCL3 family.

The protein resides in the mitochondrion. The protein localises to the membrane. The chain is Probable endonuclease lcl3 (lcl3) from Schizosaccharomyces japonicus (strain yFS275 / FY16936) (Fission yeast).